Here is a 644-residue protein sequence, read N- to C-terminus: DNA gyrase subunit B (644 aa).

The 115-residue stretch at 429-543 (CEIFLVEGDS…AGYVYIAQPP (115 aa)) folds into the Toprim domain. Glutamate 435, aspartate 508, and aspartate 510 together coordinate Mg(2+).

Belongs to the type II topoisomerase GyrB family. Heterotetramer, composed of two GyrA and two GyrB chains. In the heterotetramer, GyrA contains the active site tyrosine that forms a transient covalent intermediate with DNA, while GyrB binds cofactors and catalyzes ATP hydrolysis. The cofactor is Mg(2+). Mn(2+) is required as a cofactor. It depends on Ca(2+) as a cofactor.

Its subcellular location is the cytoplasm. The catalysed reaction is ATP-dependent breakage, passage and rejoining of double-stranded DNA.. A type II topoisomerase that negatively supercoils closed circular double-stranded (ds) DNA in an ATP-dependent manner to modulate DNA topology and maintain chromosomes in an underwound state. Negative supercoiling favors strand separation, and DNA replication, transcription, recombination and repair, all of which involve strand separation. Also able to catalyze the interconversion of other topological isomers of dsDNA rings, including catenanes and knotted rings. Type II topoisomerases break and join 2 DNA strands simultaneously in an ATP-dependent manner. This chain is DNA gyrase subunit B, found in Staphylococcus aureus (strain USA300).